Reading from the N-terminus, the 193-residue chain is Holliday junction branch migration complex subunit RuvA (193 aa).

Positions 1 to 64 (MIGRIQGTLV…EDAQQLFGFA (64 aa)) are domain I. The interval 65–139 (TEIEREAFRQ…GKLAPDLGIT (75 aa)) is domain II. The interval 139–143 (TGGKP) is flexible linker. Residues 144-193 (QAIEATSEVLQALLSLGYSEKEALLALKQIPPETSVSDGIRMGLKYLSKP) are domain III.

It belongs to the RuvA family. As to quaternary structure, homotetramer. Forms an RuvA(8)-RuvB(12)-Holliday junction (HJ) complex. HJ DNA is sandwiched between 2 RuvA tetramers; dsDNA enters through RuvA and exits via RuvB. An RuvB hexamer assembles on each DNA strand where it exits the tetramer. Each RuvB hexamer is contacted by two RuvA subunits (via domain III) on 2 adjacent RuvB subunits; this complex drives branch migration. In the full resolvosome a probable DNA-RuvA(4)-RuvB(12)-RuvC(2) complex forms which resolves the HJ.

It is found in the cytoplasm. In terms of biological role, the RuvA-RuvB-RuvC complex processes Holliday junction (HJ) DNA during genetic recombination and DNA repair, while the RuvA-RuvB complex plays an important role in the rescue of blocked DNA replication forks via replication fork reversal (RFR). RuvA specifically binds to HJ cruciform DNA, conferring on it an open structure. The RuvB hexamer acts as an ATP-dependent pump, pulling dsDNA into and through the RuvAB complex. HJ branch migration allows RuvC to scan DNA until it finds its consensus sequence, where it cleaves and resolves the cruciform DNA. The chain is Holliday junction branch migration complex subunit RuvA from Polynucleobacter asymbioticus (strain DSM 18221 / CIP 109841 / QLW-P1DMWA-1) (Polynucleobacter necessarius subsp. asymbioticus).